We begin with the raw amino-acid sequence, 399 residues long: Zinc finger TRAF-type-containing protein 1 (399 aa).

The span at 1-13 (MSGAEEAGGGGPA) shows a compositional bias: gly residues. The segment at 1-20 (MSGAEEAGGGGPAAGPAGAV) is disordered. Residues 106–151 (CTVCLDLPKASVYQCTNGHLMCAGCFIHLLADARLKEEQATCPNCR) form an RING-type; degenerate zinc finger. The TRAF-type zinc-finger motif lies at 152-210 (CEISKSLCCRNLAVEKAVSELPSECGFCLRQFPRSLLERHQKEECQDRVTQCKYKRIGC).

This sequence belongs to the ZFTRAF1 family. In terms of assembly, interacts with LGALS3.

The protein localises to the cytoplasm. It is found in the perinuclear region. This is Zinc finger TRAF-type-containing protein 1 from Rattus norvegicus (Rat).